A 124-amino-acid polypeptide reads, in one-letter code: Aspartate 1-decarboxylase (124 aa).

S25 (schiff-base intermediate with substrate; via pyruvic acid) is an active-site residue. Pyruvic acid (Ser) is present on S25. A substrate-binding site is contributed by T57. Y58 functions as the Proton donor in the catalytic mechanism. Position 73 to 75 (73 to 75) interacts with substrate; sequence GAA.

The protein belongs to the PanD family. In terms of assembly, heterooctamer of four alpha and four beta subunits. Pyruvate is required as a cofactor. Is synthesized initially as an inactive proenzyme, which is activated by self-cleavage at a specific serine bond to produce a beta-subunit with a hydroxyl group at its C-terminus and an alpha-subunit with a pyruvoyl group at its N-terminus.

It localises to the cytoplasm. It catalyses the reaction L-aspartate + H(+) = beta-alanine + CO2. It functions in the pathway cofactor biosynthesis; (R)-pantothenate biosynthesis; beta-alanine from L-aspartate: step 1/1. Catalyzes the pyruvoyl-dependent decarboxylation of aspartate to produce beta-alanine. The protein is Aspartate 1-decarboxylase of Clostridium botulinum (strain Alaska E43 / Type E3).